A 138-amino-acid polypeptide reads, in one-letter code: MANVKTEKSAKFAWNEENTQQAVTMYQQLINENGLEFANSDGLKEIAKTVGAASPVSVPSKLTSAKAYQKSDKPRKVGGGSSIRKAHYVRVIAKHAIDSGIIKDADDLASLESAKLETLDAVAQLLGVADEVKQAAGE.

The protein belongs to the T5likevirus A2 protein family. Interacts with A1 protein; the two proteins form heterooligomers.

Functionally, involved, together with A1 protein, in the second step transfer (SST) which allows the completion of viral DNA into the host cell. The protein is Protein A2-A3 (A2-A3) of Escherichia coli (Enterobacteria phage BF23).